Here is a 91-residue protein sequence, read N- to C-terminus: Small ribosomal subunit protein uS19 (91 aa).

It belongs to the universal ribosomal protein uS19 family.

Its function is as follows. Protein S19 forms a complex with S13 that binds strongly to the 16S ribosomal RNA. This is Small ribosomal subunit protein uS19 from Opitutus terrae (strain DSM 11246 / JCM 15787 / PB90-1).